Consider the following 732-residue polypeptide: Catalase-peroxidase (732 aa).

Basic and acidic residues predominate over residues 1 to 11 (MDAKTDDKDGG). The interval 1–24 (MDAKTDDKDGGKCPFPHGGGRGRR) is disordered. The tryptophyl-tyrosyl-methioninium (Trp-Tyr) (with M-245) cross-link spans 97–219 (WHSAGTYRTT…LGAVQMGLIY (123 aa)). The active-site Proton acceptor is H98. A cross-link (tryptophyl-tyrosyl-methioninium (Tyr-Met) (with W-97)) is located at residues 219 to 245 (YVNPEGPNGNPDPVAAAKDIRETFARM). A heme b-binding site is contributed by H260.

Belongs to the peroxidase family. Peroxidase/catalase subfamily. In terms of assembly, homodimer or homotetramer. It depends on heme b as a cofactor. Formation of the three residue Trp-Tyr-Met cross-link is important for the catalase, but not the peroxidase activity of the enzyme.

The catalysed reaction is H2O2 + AH2 = A + 2 H2O. It catalyses the reaction 2 H2O2 = O2 + 2 H2O. Bifunctional enzyme with both catalase and broad-spectrum peroxidase activity. This chain is Catalase-peroxidase, found in Rhodopseudomonas palustris (strain HaA2).